The following is a 152-amino-acid chain: Photosystem II extrinsic protein U, chloroplastic (152 aa).

The N-terminal 35 residues, 1-35 (MDSTAFVGAAAPLRVAAAARSTICMAAADDKPVVS), are a transit peptide targeting the chloroplast. The transit peptide at 36–59 (RRAALTGAAAAALAAVAGSLPALA) directs the protein to the thylakoid.

Belongs to the PsbU family. In terms of assembly, PSII is composed of 1 copy each of membrane proteins PsbA, PsbB, PsbC, PsbD, PsbE, PsbF, PsbH, PsbI, PsbJ, PsbK, PsbL, PsbM, PsbT, PsbX, PsbY, PsbZ, Psb30/Ycf12, at least 3 peripheral proteins of the oxygen-evolving complex and a large number of cofactors. It forms dimeric complexes. The oxygen-evolving complex in red algae is composed of PsbO (OEC33), PsbQ', cytochrome c-550 and PsbU. Predicted to be translocated into the thylakoid lumen by the Tat system.

The protein resides in the plastid. It is found in the chloroplast thylakoid membrane. In terms of biological role, one of the extrinsic, lumenal subunits of photosystem II (PSII). PSII is a light-driven water plastoquinone oxidoreductase, using light energy to abstract electrons from H(2)O, generating a proton gradient subsequently used for ATP formation. The extrinsic proteins stabilize the structure of photosystem II oxygen-evolving complex (OEC), the ion environment of oxygen evolution and protect the OEC against heat-induced inactivation. The polypeptide is Photosystem II extrinsic protein U, chloroplastic (Pyropia yezoensis (Susabi-nori)).